The sequence spans 70 residues: Sec-independent protein translocase protein TatA (70 aa).

Residues 1–21 traverse the membrane as a helical segment; sequence MAIGVNQLLIILVIIVLLFGA.

The protein belongs to the TatA/E family. The Tat system comprises two distinct complexes: a TatABC complex, containing multiple copies of TatA, TatB and TatC subunits, and a separate TatA complex, containing only TatA subunits. Substrates initially bind to the TatABC complex, which probably triggers association of the separate TatA complex to form the active translocon.

It is found in the cell inner membrane. Its function is as follows. Part of the twin-arginine translocation (Tat) system that transports large folded proteins containing a characteristic twin-arginine motif in their signal peptide across membranes. TatA could form the protein-conducting channel of the Tat system. This chain is Sec-independent protein translocase protein TatA, found in Campylobacter curvus (strain 525.92).